The chain runs to 396 residues: Elongation factor Tu (396 aa).

The tr-type G domain occupies 10 to 206 (KPHVNVGTIG…ALDTYIPTPE (197 aa)). Positions 19-26 (GHVDHGKT) are G1. 19–26 (GHVDHGKT) serves as a coordination point for GTP. T26 provides a ligand contact to Mg(2+). The G2 stretch occupies residues 60–64 (GITIN). The segment at 81–84 (DCPG) is G3. GTP contacts are provided by residues 81-85 (DCPGH) and 136-139 (NKCD). The interval 136–139 (NKCD) is G4. The G5 stretch occupies residues 174–176 (SAK).

Belongs to the TRAFAC class translation factor GTPase superfamily. Classic translation factor GTPase family. EF-Tu/EF-1A subfamily. As to quaternary structure, monomer.

The protein resides in the cytoplasm. It catalyses the reaction GTP + H2O = GDP + phosphate + H(+). Its function is as follows. GTP hydrolase that promotes the GTP-dependent binding of aminoacyl-tRNA to the A-site of ribosomes during protein biosynthesis. The sequence is that of Elongation factor Tu from Burkholderia cepacia (Pseudomonas cepacia).